The sequence spans 190 residues: Large ribosomal subunit protein uL10 (190 aa).

The protein belongs to the universal ribosomal protein uL10 family. As to quaternary structure, part of the ribosomal stalk of the 50S ribosomal subunit. The N-terminus interacts with L11 and the large rRNA to form the base of the stalk. The C-terminus forms an elongated spine to which L12 dimers bind in a sequential fashion forming a multimeric L10(L12)X complex.

Its function is as follows. Forms part of the ribosomal stalk, playing a central role in the interaction of the ribosome with GTP-bound translation factors. In Trichodesmium erythraeum (strain IMS101), this protein is Large ribosomal subunit protein uL10.